We begin with the raw amino-acid sequence, 322 residues long: Pilin gene-inverting protein (322 aa).

Functionally, may be the site-specific invertase required for pilin gene inversion. Moraxella can express either a Q or I pilin; the inversion of 2 kb of DNA determines which pilin is expressed. This chain is Pilin gene-inverting protein (piv), found in Moraxella lacunata.